The following is a 417-amino-acid chain: NADH-quinone oxidoreductase subunit D (417 aa).

Belongs to the complex I 49 kDa subunit family. As to quaternary structure, NDH-1 is composed of 14 different subunits. Subunits NuoB, C, D, E, F, and G constitute the peripheral sector of the complex.

The protein localises to the cell inner membrane. The enzyme catalyses a quinone + NADH + 5 H(+)(in) = a quinol + NAD(+) + 4 H(+)(out). Its function is as follows. NDH-1 shuttles electrons from NADH, via FMN and iron-sulfur (Fe-S) centers, to quinones in the respiratory chain. The immediate electron acceptor for the enzyme in this species is believed to be ubiquinone. Couples the redox reaction to proton translocation (for every two electrons transferred, four hydrogen ions are translocated across the cytoplasmic membrane), and thus conserves the redox energy in a proton gradient. The polypeptide is NADH-quinone oxidoreductase subunit D (Alkalilimnicola ehrlichii (strain ATCC BAA-1101 / DSM 17681 / MLHE-1)).